Consider the following 507-residue polypeptide: Maturase K (507 aa).

The protein belongs to the intron maturase 2 family. MatK subfamily.

The protein localises to the plastid. It is found in the chloroplast. Functionally, usually encoded in the trnK tRNA gene intron. Probably assists in splicing its own and other chloroplast group II introns. The polypeptide is Maturase K (Umbellularia californica (California bay laurel)).